The following is a 116-amino-acid chain: Iron-sulfur cluster insertion protein ErpA (116 aa).

Iron-sulfur cluster-binding residues include cysteine 44, cysteine 108, and cysteine 110.

This sequence belongs to the HesB/IscA family. As to quaternary structure, homodimer. The cofactor is iron-sulfur cluster.

Its function is as follows. Required for insertion of 4Fe-4S clusters for at least IspG. The protein is Iron-sulfur cluster insertion protein ErpA of Shewanella pealeana (strain ATCC 700345 / ANG-SQ1).